We begin with the raw amino-acid sequence, 119 residues long: Aspartate 1-decarboxylase (119 aa).

S25 (schiff-base intermediate with substrate; via pyruvic acid) is an active-site residue. S25 carries the pyruvic acid (Ser) modification. T57 contacts substrate. Catalysis depends on Y58, which acts as the Proton donor. 73–75 (GAA) contacts substrate.

The protein belongs to the PanD family. In terms of assembly, heterooctamer of four alpha and four beta subunits. Pyruvate is required as a cofactor. Post-translationally, is synthesized initially as an inactive proenzyme, which is activated by self-cleavage at a specific serine bond to produce a beta-subunit with a hydroxyl group at its C-terminus and an alpha-subunit with a pyruvoyl group at its N-terminus.

The protein localises to the cytoplasm. The catalysed reaction is L-aspartate + H(+) = beta-alanine + CO2. Its pathway is cofactor biosynthesis; (R)-pantothenate biosynthesis; beta-alanine from L-aspartate: step 1/1. Catalyzes the pyruvoyl-dependent decarboxylation of aspartate to produce beta-alanine. In Ruthia magnifica subsp. Calyptogena magnifica, this protein is Aspartate 1-decarboxylase.